A 280-amino-acid chain; its full sequence is Dopamine receptor-interacting protein 1 (280 aa).

In terms of assembly, interacts with DRD1, the dopamine D1 receptor.

Could be a regulator of the dopamine receptor signaling pathway. This Bos taurus (Bovine) protein is Dopamine receptor-interacting protein 1 (DORIP1).